Reading from the N-terminus, the 623-residue chain is V-type proton ATPase catalytic subunit A (623 aa).

252–259 (GAFGCGKT) provides a ligand contact to ATP.

It belongs to the ATPase alpha/beta chains family. In terms of assembly, V-ATPase is a heteromultimeric enzyme composed of a peripheral catalytic V1 complex (main components: subunits A, B, C, D, E, and F) attached to an integral membrane V0 proton pore complex (main component: the proteolipid protein).

It catalyses the reaction ATP + H2O + 4 H(+)(in) = ADP + phosphate + 5 H(+)(out). In terms of biological role, catalytic subunit of the peripheral V1 complex of vacuolar ATPase. V-ATPase vacuolar ATPase is responsible for acidifying a variety of intracellular compartments in eukaryotic cells. This chain is V-type proton ATPase catalytic subunit A, found in Citrus unshiu (Satsuma mandarin).